A 293-amino-acid polypeptide reads, in one-letter code: 4-hydroxy-tetrahydrodipicolinate synthase (293 aa).

Pyruvate is bound at residue S45. Y133 serves as the catalytic Proton donor/acceptor. Residue K161 is the Schiff-base intermediate with substrate of the active site. I203 provides a ligand contact to pyruvate.

This sequence belongs to the DapA family. Homotetramer; dimer of dimers.

The protein localises to the cytoplasm. The catalysed reaction is L-aspartate 4-semialdehyde + pyruvate = (2S,4S)-4-hydroxy-2,3,4,5-tetrahydrodipicolinate + H2O + H(+). It participates in amino-acid biosynthesis; L-lysine biosynthesis via DAP pathway; (S)-tetrahydrodipicolinate from L-aspartate: step 3/4. Catalyzes the condensation of (S)-aspartate-beta-semialdehyde [(S)-ASA] and pyruvate to 4-hydroxy-tetrahydrodipicolinate (HTPA). The protein is 4-hydroxy-tetrahydrodipicolinate synthase of Psychromonas ingrahamii (strain DSM 17664 / CCUG 51855 / 37).